A 312-amino-acid chain; its full sequence is Acetaldehyde dehydrogenase 4 (312 aa).

An NAD(+)-binding site is contributed by S12 to I15. C132 functions as the Acyl-thioester intermediate in the catalytic mechanism. Residues S163–N171 and N290 each bind NAD(+).

Belongs to the acetaldehyde dehydrogenase family.

It carries out the reaction acetaldehyde + NAD(+) + CoA = acetyl-CoA + NADH + H(+). In Azotobacter vinelandii (strain DJ / ATCC BAA-1303), this protein is Acetaldehyde dehydrogenase 4.